The following is a 310-amino-acid chain: UPF0761 membrane protein VF_0100 (310 aa).

The next 6 helical transmembrane spans lie at 34–54 (YMAY…LSVL), 97–117 (MTAV…SSID), 136–156 (FSLY…SLAA), 178–198 (LLGW…YLLV), 207–227 (HALI…VGFA), and 242–262 (ALAA…IVLI).

Belongs to the UPF0761 family.

Its subcellular location is the cell inner membrane. This Aliivibrio fischeri (strain ATCC 700601 / ES114) (Vibrio fischeri) protein is UPF0761 membrane protein VF_0100.